A 257-amino-acid chain; its full sequence is Pimeloyl-[acyl-carrier protein] methyl ester esterase (257 aa).

Residues 15-241 form the AB hydrolase-1 domain; the sequence is HLVLLHGWGL…KAAHAPFVSH (227 aa). Residues W22, 82–83, and 143–147 contribute to the substrate site; these read SL and FLALQ. S82 acts as the Nucleophile in catalysis. Catalysis depends on residues D207 and H235. Residue H235 participates in substrate binding.

The protein belongs to the AB hydrolase superfamily. Carboxylesterase BioH family. As to quaternary structure, monomer.

The protein resides in the cytoplasm. The enzyme catalyses 6-carboxyhexanoyl-[ACP] methyl ester + H2O = 6-carboxyhexanoyl-[ACP] + methanol + H(+). It functions in the pathway cofactor biosynthesis; biotin biosynthesis. Functionally, the physiological role of BioH is to remove the methyl group introduced by BioC when the pimeloyl moiety is complete. It allows to synthesize pimeloyl-ACP via the fatty acid synthetic pathway through the hydrolysis of the ester bonds of pimeloyl-ACP esters. This Klebsiella pneumoniae (strain 342) protein is Pimeloyl-[acyl-carrier protein] methyl ester esterase.